We begin with the raw amino-acid sequence, 281 residues long: N-acetylmuramic acid 6-phosphate etherase (281 aa).

The SIS domain maps to 63–226 (IVPRMKQGGR…TTSVMIQLGR (164 aa)). Catalysis depends on Glu-91, which acts as the Proton donor. Glu-122 is a catalytic residue.

Belongs to the GCKR-like family. MurNAc-6-P etherase subfamily. As to quaternary structure, homodimer.

The enzyme catalyses N-acetyl-D-muramate 6-phosphate + H2O = N-acetyl-D-glucosamine 6-phosphate + (R)-lactate. It functions in the pathway amino-sugar metabolism; N-acetylmuramate degradation. Its function is as follows. Specifically catalyzes the cleavage of the D-lactyl ether substituent of MurNAc 6-phosphate, producing GlcNAc 6-phosphate and D-lactate. In Bacteroides fragilis (strain ATCC 25285 / DSM 2151 / CCUG 4856 / JCM 11019 / LMG 10263 / NCTC 9343 / Onslow / VPI 2553 / EN-2), this protein is N-acetylmuramic acid 6-phosphate etherase.